The sequence spans 880 residues: Protein translocase subunit SecA (880 aa).

Residues Gln87, 105–109 (GEGKT), and Asp501 contribute to the ATP site. 4 residues coordinate Zn(2+): Cys864, Cys866, Cys875, and His876.

Belongs to the SecA family. Monomer and homodimer. Part of the essential Sec protein translocation apparatus which comprises SecA, SecYEG and auxiliary proteins SecDF-YajC and YidC. The cofactor is Zn(2+).

Its subcellular location is the cell inner membrane. It is found in the cytoplasm. The enzyme catalyses ATP + H2O + cellular proteinSide 1 = ADP + phosphate + cellular proteinSide 2.. Functionally, part of the Sec protein translocase complex. Interacts with the SecYEG preprotein conducting channel. Has a central role in coupling the hydrolysis of ATP to the transfer of proteins into and across the cell membrane, serving both as a receptor for the preprotein-SecB complex and as an ATP-driven molecular motor driving the stepwise translocation of polypeptide chains across the membrane. The sequence is that of Protein translocase subunit SecA from Orientia tsutsugamushi (strain Boryong) (Rickettsia tsutsugamushi).